The following is a 508-amino-acid chain: Splicing regulatory glutamine/lysine-rich protein 1 (508 aa).

The region spanning 66–142 (RTVYVGNLNS…RPLKINHSNN (77 aa)) is the RRM domain. A phosphoserine mark is found at serine 171 and serine 184. The interval 173 to 508 (ISAAIEPESG…ENLSTKTEAV (336 aa)) is disordered. The segment covering 180-189 (ESGKSNERKG) has biased composition (basic and acidic residues). Positions 190–259 (GRSRSHTRSK…KSRSRSHSRD (70 aa)) are enriched in basic residues. Over residues 260–355 (KRKDTREKIK…DRSKEIDEKR (96 aa)) the composition is skewed to basic and acidic residues. Threonine 363 is subject to Phosphothreonine. Residues 372–388 (RRSRSSSRERRRRRSRS) are compositionally biased toward basic residues. The span at 419–488 (REKERDHISE…DAPRTEENKI (70 aa)) shows a compositional bias: basic and acidic residues. Residues 489–508 (QHNGNCQLNEENLSTKTEAV) show a composition bias toward polar residues. Lysine 504 participates in a covalent cross-link: Glycyl lysine isopeptide (Lys-Gly) (interchain with G-Cter in SUMO2).

Belongs to the splicing factor SR family. As to quaternary structure, homodimer. Binds SFRS1, SFRS2, SFRS3 and SFRS6. Interacts with the spliceosome. Interacts with SREK1IP1.

It is found in the nucleus. In terms of biological role, participates in the regulation of alternative splicing by modulating the activity of other splice facors. Inhibits the splicing activity of SFRS1, SFRS2 and SFRS6. Augments the splicing activity of SFRS3. This is Splicing regulatory glutamine/lysine-rich protein 1 (SREK1) from Homo sapiens (Human).